The primary structure comprises 65 residues: MNSAHPCCDPVTCKPKRGEHCISGPCCRNCKFLSPGTICKKARGDDMNDYCTGISSDCPRNRIKK.

One can recognise a Disintegrin domain in the interval 1 to 65 (MNSAHPCCDP…SDCPRNRIKK (65 aa)). 4 disulfides stabilise this stretch: Cys-7-Cys-30, Cys-21-Cys-27, Cys-26-Cys-51, and Cys-39-Cys-58. The Cell attachment site motif lies at 43 to 45 (RGD).

Belongs to the disintegrin family. Dimeric disintegrin subfamily. As to quaternary structure, heterodimer with CC8B; disulfide-linked. As to expression, expressed by the venom gland.

The protein localises to the secreted. In terms of biological role, inhibits integrins alpha-IIb/beta-3 (ITGA2B/ITGB3), alpha-V/beta-3 (ITGAV/ITGB3), and alpha-5/beta-1 (ITGA5/ITGB1). This Cerastes cerastes (Horned desert viper) protein is Disintegrin CC8A.